We begin with the raw amino-acid sequence, 83 residues long: BmKBT-like peptide (83 aa).

The first 19 residues, 1–19 (MKAALLLVISTLMLIGVLT), serve as a signal peptide directing secretion. The region spanning 21–81 (KSGYPIQHDG…TWSRETNKCR (61 aa)) is the LCN-type CS-alpha/beta domain. 4 disulfides stabilise this stretch: C31–C80, C35–C54, C41–C61, and C45–C63. Position 83 (K83) is a propeptide, removed by a carboxypeptidase.

Belongs to the long (4 C-C) scorpion toxin superfamily. Sodium channel inhibitor family. Beta subfamily. Expressed by the venom gland.

It is found in the secreted. Sodium channel inhibitor. Possesses potent toxicity in mice but induces only paralysis in cotton bollworm. The chain is BmKBT-like peptide from Olivierus martensii (Manchurian scorpion).